The primary structure comprises 741 residues: HSP-interacting protein (741 aa).

3 TPR repeats span residues 26–59 (SREL…LPAG), 65–100 (AHLR…VPRY), and 102–134 (RALL…EPGN). Positions 168–270 (ASAKGEERKK…GESKQQKHSA (103 aa)) are disordered. The segment covering 171–184 (KGEERKKSRNKRFD) has biased composition (basic and acidic residues). The segment covering 201-218 (SASTEKQAGPRQTNGTGN) has biased composition (polar residues). Residues 219 to 247 (HQDHTEDSESNGLEKLEQSTETGEKDMGK) are compositionally biased toward basic and acidic residues. Residues 248–258 (KRGAHAAGKKP) show a composition bias toward basic residues. Residues 285–364 (MKDVKLVFGE…VPIRFYVVEV (80 aa)) enclose the PB1 domain. 4 TPR repeats span residues 496-530 (EFIL…KSDF), 532-557 (EGLI…ACKI), 558-591 (NMET…RLKG), and 628-663 (SHIN…AMEK).

As to quaternary structure, interacts (via C-terminus) with O1. Interacts (via C-terminus) with OP10 (via N-terminus).

Acts as a co-chaperone for HSP90 and is required for proper folding of the myosin motor domain. The protein is HSP-interacting protein of Zea mays (Maize).